The sequence spans 170 residues: ATP synthase F(1) complex subunit delta, mitochondrial (170 aa).

Residues 1-33 (MIRSIIKSSNNLLKSNVAINSNKRFFATEASAT) constitute a mitochondrion transit peptide.

This sequence belongs to the ATPase epsilon chain family. In terms of assembly, component of the ATP synthase complex composed at least of ATP5F1A/subunit alpha, ATP5F1B/subunit beta, ATP5MC1/subunit c (homooctomer), MT-ATP6/subunit a, MT-ATP8/subunit 8, ATP5ME/subunit e, ATP5MF/subunit f, ATP5MG/subunit g, ATP5MK/subunit k, ATP5MJ/subunit j, ATP5F1C/subunit gamma, ATP5F1D/subunit delta, ATP5F1E/subunit epsilon, ATP5PF/subunit F6, ATP5PB/subunit b, ATP5PD/subunit d, ATP5PO/subunit OSCP. ATP synthase complex consists of a soluble F(1) head domain (subunits alpha(3) and beta(3)) - the catalytic core - and a membrane F(0) domain - the membrane proton channel (subunits c, a, 8, e, f, g, k and j). These two domains are linked by a central stalk (subunits gamma, delta, and epsilon) rotating inside the F1 region and a stationary peripheral stalk (subunits F6, b, d, and OSCP).

The protein resides in the mitochondrion. The protein localises to the mitochondrion inner membrane. Functionally, subunit delta, of the mitochondrial membrane ATP synthase complex (F(1)F(0) ATP synthase or Complex V) that produces ATP from ADP in the presence of a proton gradient across the membrane which is generated by electron transport complexes of the respiratory chain. ATP synthase complex consist of a soluble F(1) head domain - the catalytic core - and a membrane F(1) domain - the membrane proton channel. These two domains are linked by a central stalk rotating inside the F(1) region and a stationary peripheral stalk. During catalysis, ATP synthesis in the catalytic domain of F(1) is coupled via a rotary mechanism of the central stalk subunits to proton translocation. In vivo, can only synthesize ATP although its ATP hydrolase activity can be activated artificially in vitro. With the central stalk subunit gamma, is essential for the biogenesis of F(1) catalytic part of the ATP synthase complex namely in the formation of F1 assembly intermediate. The polypeptide is ATP synthase F(1) complex subunit delta, mitochondrial (Dictyostelium discoideum (Social amoeba)).